Consider the following 250-residue polypeptide: Proteasome subunit alpha type-4-1 (250 aa).

This sequence belongs to the peptidase T1A family. In terms of assembly, the 26S proteasome consists of a 20S proteasome core and two 19S regulatory subunits. The 20S proteasome core is composed of 28 subunits that are arranged in four stacked rings, resulting in a barrel-shaped structure. The two end rings are each formed by seven alpha subunits, and the two central rings are each formed by seven beta subunits. The catalytic chamber with the active sites is on the inside of the barrel.

The protein localises to the cytoplasm. Its subcellular location is the nucleus. Its function is as follows. The proteasome is a multicatalytic proteinase complex which is characterized by its ability to cleave peptides with Arg, Phe, Tyr, Leu, and Glu adjacent to the leaving group at neutral or slightly basic pH. The proteasome has an ATP-dependent proteolytic activity. This Oryza sativa subsp. indica (Rice) protein is Proteasome subunit alpha type-4-1.